We begin with the raw amino-acid sequence, 352 residues long: C-X-C chemokine receptor type 4 (352 aa).

An important for chemokine binding and signaling region spans residues 1–21; that stretch reads MEGISIYTSDNYTEEMGSGDY. Residues 1 to 38 lie on the Extracellular side of the membrane; it reads MEGISIYTSDNYTEEMGSGDYDSIKEPCFREENAHFNR. Residue Tyr7 is modified to Sulfotyrosine. Asn11 carries N-linked (GlcNAc...) asparagine glycosylation. Residue Tyr12 is modified to Sulfotyrosine. O-linked (Xyl...) (chondroitin sulfate) serine glycosylation occurs at Ser18. Tyr21 carries the sulfotyrosine modification. 2 cysteine pairs are disulfide-bonded: Cys28/Cys274 and Cys109/Cys186. Residues 39 to 63 traverse the membrane as a helical segment; sequence IFLPTIYSIIFLTGIVGNGLVILVM. Residues 64–77 lie on the Cytoplasmic side of the membrane; sequence GYQKKLRSMTDKYR. The helical transmembrane segment at 78 to 99 threads the bilayer; sequence LHLSVADLLFVITLPFWAVDAV. A chemokine binding region spans residues 94 to 97; sequence WAVD. Topologically, residues 100–110 are extracellular; sequence ANWYFGNFLCK. The chain crosses the membrane as a helical span at residues 111-130; sequence AVHVIYTVNLYSSVLILAFI. A chemokine binding region spans residues 113 to 117; it reads HVIYT. The Cytoplasmic portion of the chain corresponds to 131-154; it reads SLDRYLAIVHATNSQKPRKLLAEK. The Important for signaling signature appears at 133-135; sequence DRY. The tract at residues 135-147 is involved in dimerization; when bound to chemokine; the sequence is YLAIVHATNSQKP. A helical transmembrane segment spans residues 155–174; sequence VVYVGVWIPALLLTIPDFIF. The Extracellular segment spans residues 175–195; that stretch reads ASVSEADDRYICDRFYPNDLW. Residues 186–190 are chemokine binding, important for signaling; the sequence is CDRFY. The tract at residues 191–210 is involved in dimerization; the sequence is PNDLWVVVFQFQHIMVGLIL. Residues 196–216 traverse the membrane as a helical segment; the sequence is VVVFQFQHIMVGLILPGIVIL. At 217-241 the chain is on the cytoplasmic side; the sequence is SCYCIIISKLSHSKGHQKRKALKTT. A helical membrane pass occupies residues 242–261; sequence VILILAFFACWLPYYIGISI. The Extracellular portion of the chain corresponds to 262 to 282; it reads DSFILLEIIKQGCEFENTVHK. The tract at residues 266–268 is involved in dimerization; the sequence is LLE. The helical transmembrane segment at 283–302 threads the bilayer; the sequence is WISITEALAFFHCCLNPILY. The Cytoplasmic segment spans residues 303–352; it reads AFLGAKFKTSAQHALTSVSRGSSLKILSKGKRGGHSSVSTESESSSFHSS. Residues Ser319 and Ser321 each carry the phosphoserine modification. Phosphoserine; by PKC and GRK6 is present on residues Ser324 and Ser325. Positions 329 to 352 are disordered; sequence LSKGKRGGHSSVSTESESSSFHSS. Ser330 bears the Phosphoserine; by GRK6 mark. A Glycyl lysine isopeptide (Lys-Gly) (interchain with G-Cter in ubiquitin) cross-link involves residue Lys331. The span at 337–352 shows a compositional bias: low complexity; the sequence is HSSVSTESESSSFHSS. Ser339 carries the phosphoserine; by GRK6 modification. A phosphoserine mark is found at Ser348 and Ser351.

This sequence belongs to the G-protein coupled receptor 1 family. Monomer. Can form homodimers. Interacts with CD164. Interacts with ARRB2; the interaction is dependent on the C-terminal phosphorylation of CXCR4 and allows activation of MAPK1 and MAPK3. Interacts with ARR3; the interaction is dependent on the C-terminal phosphorylation of CXCR4 and modulates calcium mobilization. Interacts with RNF113A; the interaction, enhanced by CXCL12, promotes CXCR4 ubiquitination and subsequent degradation. Interacts (via the cytoplasmic C-terminal) with ITCH (via the WW domains I and II); the interaction, enhanced by CXCL12, promotes CXCR4 ubiquitination and leads to its degradation. Interacts with extracellular ubiquitin. Interacts with DBN1; this interaction is enhanced by antigenic stimulation. Following LPS binding, may form a complex with GDF5, HSP90AA1 and HSPA8. Phosphorylated on agonist stimulation. Rapidly phosphorylated on serine and threonine residues in the C-terminal. Phosphorylation at Ser-324 and Ser-325 leads to recruitment of ITCH, ubiquitination and protein degradation. In terms of processing, ubiquitinated after ligand binding, leading to its degradation. Ubiquitinated by ITCH at the cell membrane on agonist stimulation. The ubiquitin-dependent mechanism, endosomal sorting complex required for transport (ESCRT), then targets CXCR4 for lysosomal degradation. This process is dependent also on prior Ser-/Thr-phosphorylation in the C-terminal of CXCR4. Also binding of ARRB1 to STAM negatively regulates CXCR4 sorting to lysosomes though modulating ubiquitination of SFR5S. Post-translationally, sulfation is required for efficient binding of CXCL12/SDF-1alpha and promotes its dimerization. O- and N-glycosylated. N-glycosylation can mask coreceptor function. The O-glycosylation chondroitin sulfate attachment does not affect interaction with CXCL12/SDF-1alpha nor its coreceptor activity.

The protein localises to the cell membrane. Its subcellular location is the cell junction. It localises to the early endosome. The protein resides in the late endosome. It is found in the lysosome. Its function is as follows. Receptor for the C-X-C chemokine CXCL12/SDF-1 that transduces a signal by increasing intracellular calcium ion levels and enhancing MAPK1/MAPK3 activation. Involved in the AKT signaling cascade. Plays a role in regulation of cell migration, e.g. during wound healing. Acts as a receptor for extracellular ubiquitin; leading to enhanced intracellular calcium ions and reduced cellular cAMP levels. Binds bacterial lipopolysaccharide (LPS) et mediates LPS-induced inflammatory response, including TNF secretion by monocytes. Involved in hematopoiesis and in cardiac ventricular septum formation. Also plays an essential role in vascularization of the gastrointestinal tract, probably by regulating vascular branching and/or remodeling processes in endothelial cells. Involved in cerebellar development. In the CNS, could mediate hippocampal-neuron survival. This chain is C-X-C chemokine receptor type 4 (CXCR4), found in Macaca fascicularis (Crab-eating macaque).